The sequence spans 350 residues: Probable 2-dehydropantoate 2-reductase (350 aa).

NADP(+) is bound by residues 9 to 14 (GAGSIG) and Asn-115. Position 115 (Asn-115) interacts with substrate. Lys-213 functions as the Proton donor in the catalytic mechanism. The substrate site is built by Asn-217, Asn-221, and Ser-295. Glu-307 is an NADP(+) binding site.

The protein belongs to the ketopantoate reductase family.

It catalyses the reaction (R)-pantoate + NADP(+) = 2-dehydropantoate + NADPH + H(+). It functions in the pathway cofactor biosynthesis; (R)-pantothenate biosynthesis; (R)-pantoate from 3-methyl-2-oxobutanoate: step 2/2. Catalyzes the NADPH-dependent reduction of ketopantoate into pantoic acid. The polypeptide is Probable 2-dehydropantoate 2-reductase (Schizosaccharomyces pombe (strain 972 / ATCC 24843) (Fission yeast)).